Consider the following 271-residue polypeptide: Short chain dehydrogenase asqE (271 aa).

3 residues coordinate NADP(+): Ile-22, Asp-70, and Asn-99. Catalysis depends on proton donor residues Ser-152 and Ser-153. The NADP(+) site is built by Tyr-167, Lys-171, and Thr-203. The Proton acceptor role is filled by Tyr-167. Lys-171 serves as the catalytic Lowers pKa of active site Tyr.

Belongs to the short-chain dehydrogenases/reductases (SDR) family.

The enzyme catalyses a primary alcohol + NAD(+) = an aldehyde + NADH + H(+). It catalyses the reaction a secondary alcohol + NAD(+) = a ketone + NADH + H(+). The protein operates within secondary metabolite biosynthesis. Its pathway is alkaloid biosynthesis. It participates in mycotoxin biosynthesis. Its function is as follows. Short chain dehydrogenase; part of the gene cluster that mediates the biosynthesis of the aspoquinolone mycotoxins. The role of asqE within the aspoquinolone pathway has still to be determined. The first step of the pathway is catalyzed by the nonribosomal peptide synthetase asqK that condenses anthranilic acid and O-methyl-L-tyrosine to produce 4'-methoxycyclopeptin. 4'-methoxycyclopeptin is then converted to 4'-methoxydehydrocyclopeptin by the ketoglutarate-dependent dioxygenase asqJ. AsqJ also converts its first product 4'-methoxydehydrocyclopeptin to 4'-methoxycyclopenin. The following conversion of 4'-methoxycyclopenin into 4'-methoxyviridicatin is catalyzed by the cyclopenase asqI. 4'-methoxyviridicatin is the precursor of quinolone natural products, and is further converted to quinolinone B. The prenyltransferase asqH1 then catalyzes the canonical Friedel-Crafts alkylation of quinolinone B with dimethylallyl cation to yield dimethylallyl quinolone, which is subjected to FAD-dependent dehydrogenation by the FAD-linked oxidoreductase asqF to yield conjugated aryl diene. The delta(3') double bond then serves as the site of the second alkylation with DMAPP catalyzed by the prenyltransferase asqH2 to yield a carbenium ion intermediate, which can be attacked by H(2)O to yield a styrenyl quinolone containing a C3'-hydroxyprenyl chain. The FAD-dependent monooxygenase asqG performs epoxidation of the terminal C7'-C8' olefin. Finally, after dehydratation of the epoxide at C3 by asqC, the quinolone epoxide rearrangement protein asqO catalyzes an enzymatic 3-exo-tet cyclization to yield the cyclopropyl-THF ring system in aspoquinolone. This Emericella nidulans (strain FGSC A4 / ATCC 38163 / CBS 112.46 / NRRL 194 / M139) (Aspergillus nidulans) protein is Short chain dehydrogenase asqE.